The primary structure comprises 425 residues: Dihydroorotase (425 aa).

Zn(2+)-binding residues include His58 and His60. Substrate is bound by residues His60–Arg62 and Asn92. Residues Asp150, His177, and His230 each contribute to the Zn(2+) site. Asn276 provides a ligand contact to substrate. Asp303 is a Zn(2+) binding site. Residue Asp303 is part of the active site. Residues His307 and Phe321–Gly322 each bind substrate.

Belongs to the metallo-dependent hydrolases superfamily. DHOase family. Class I DHOase subfamily. Zn(2+) serves as cofactor.

The enzyme catalyses (S)-dihydroorotate + H2O = N-carbamoyl-L-aspartate + H(+). It functions in the pathway pyrimidine metabolism; UMP biosynthesis via de novo pathway; (S)-dihydroorotate from bicarbonate: step 3/3. In terms of biological role, catalyzes the reversible cyclization of carbamoyl aspartate to dihydroorotate. This Pediococcus pentosaceus (strain ATCC 25745 / CCUG 21536 / LMG 10740 / 183-1w) protein is Dihydroorotase.